A 256-amino-acid polypeptide reads, in one-letter code: Adenosylcobinamide-GDP ribazoletransferase (256 aa).

Helical transmembrane passes span 40-60, 64-84, 114-134, 143-163, 194-214, and 234-254; these read YFPL…WLVL, PAQG…TGAF, IGAF…QLLS, ILVA…SHLL, VVPL…GLIL, and CLGM…LAWM.

It belongs to the CobS family. Mg(2+) is required as a cofactor.

The protein localises to the cell inner membrane. It carries out the reaction alpha-ribazole + adenosylcob(III)inamide-GDP = adenosylcob(III)alamin + GMP + H(+). The catalysed reaction is alpha-ribazole 5'-phosphate + adenosylcob(III)inamide-GDP = adenosylcob(III)alamin 5'-phosphate + GMP + H(+). It functions in the pathway cofactor biosynthesis; adenosylcobalamin biosynthesis; adenosylcobalamin from cob(II)yrinate a,c-diamide: step 7/7. Its function is as follows. Joins adenosylcobinamide-GDP and alpha-ribazole to generate adenosylcobalamin (Ado-cobalamin). Also synthesizes adenosylcobalamin 5'-phosphate from adenosylcobinamide-GDP and alpha-ribazole 5'-phosphate. This chain is Adenosylcobinamide-GDP ribazoletransferase, found in Ralstonia pickettii (strain 12J).